We begin with the raw amino-acid sequence, 134 residues long: UPF0412 protein YaaI (134 aa).

An N-terminal signal peptide occupies residues 1–23 (MKSVFTLSASLAISLLLCCTAQA).

This sequence belongs to the UPF0412 family.

This is UPF0412 protein YaaI from Escherichia coli O7:K1 (strain IAI39 / ExPEC).